The chain runs to 342 residues: Guanine nucleotide-binding protein alpha-9 subunit (342 aa).

Residue Gly-2 is the site of N-myristoyl glycine attachment. Residue Cys-3 is the site of S-palmitoyl cysteine attachment. The region spanning 28 to 342 (REIKLLLLGS…IIQSILKLHY (315 aa)) is the G-alpha domain. Positions 31–44 (KLLLLGSGDSGKST) are G1 motif. GTP is bound by residues 36-43 (GSGDSGKS), 167-173 (LRCRQRT), 192-196 (DVGGQ), 261-264 (NKND), and Ala-316. Residues Ser-43 and Thr-173 each coordinate Mg(2+). Residues 165–173 (DVLRCRQRT) are G2 motif. The segment at 188 to 197 (FRLIDVGGQK) is G3 motif. Positions 257 to 264 (VLFLNKND) are G4 motif. The segment at 314–319 (TTATDT) is G5 motif.

The protein belongs to the G-alpha family. In terms of assembly, g proteins are composed of 3 units; alpha, beta and gamma. The alpha chain contains the guanine nucleotide binding site.

Functionally, guanine nucleotide-binding proteins (G proteins) are involved as modulators or transducers in various transmembrane signaling systems. G alpha-9 antagonizes broad chemotactic response. It functions rapidly following receptor stimulation to negatively regulate PI3K/PTEN, adenylyl cyclase, and guanylyl cyclase pathways. This Dictyostelium discoideum (Social amoeba) protein is Guanine nucleotide-binding protein alpha-9 subunit (gpaI).